Consider the following 328-residue polypeptide: Tryptophan--tRNA ligase (328 aa).

ATP-binding positions include 8-10 (RPT) and 16-17 (GH). The short motif at 9-17 (PTGKLHIGH) is the 'HIGH' region element. Aspartate 136 is an L-tryptophan binding site. Residues 148 to 150 (GED), leucine 186, and 193 to 197 (KMSKS) each bind ATP. The short motif at 193 to 197 (KMSKS) is the 'KMSKS' region element.

This sequence belongs to the class-I aminoacyl-tRNA synthetase family. Homodimer.

It is found in the cytoplasm. It carries out the reaction tRNA(Trp) + L-tryptophan + ATP = L-tryptophyl-tRNA(Trp) + AMP + diphosphate + H(+). Catalyzes the attachment of tryptophan to tRNA(Trp). The sequence is that of Tryptophan--tRNA ligase from Thermotoga maritima (strain ATCC 43589 / DSM 3109 / JCM 10099 / NBRC 100826 / MSB8).